Here is a 254-residue protein sequence, read N- to C-terminus: Ribosomal RNA small subunit methyltransferase J (254 aa).

Residues 107 to 108, 123 to 124, and Asp-177 contribute to the S-adenosyl-L-methionine site; these read RD and ER.

Belongs to the methyltransferase superfamily. RsmJ family.

It is found in the cytoplasm. The enzyme catalyses guanosine(1516) in 16S rRNA + S-adenosyl-L-methionine = N(2)-methylguanosine(1516) in 16S rRNA + S-adenosyl-L-homocysteine + H(+). Its function is as follows. Specifically methylates the guanosine in position 1516 of 16S rRNA. The polypeptide is Ribosomal RNA small subunit methyltransferase J (Histophilus somni (strain 2336) (Haemophilus somnus)).